A 209-amino-acid chain; its full sequence is Small ribosomal subunit protein uS4 (209 aa).

The segment at 22-45 is disordered; it reads RGRNPLLRKPNPPGQHGMQRKKKS. An S4 RNA-binding domain is found at 93-154; sequence CRLDNIVYRL…KSRRLAIVTE (62 aa).

It belongs to the universal ribosomal protein uS4 family. Part of the 30S ribosomal subunit. Contacts protein S5. The interaction surface between S4 and S5 is involved in control of translational fidelity.

Functionally, one of the primary rRNA binding proteins, it binds directly to 16S rRNA where it nucleates assembly of the body of the 30S subunit. Its function is as follows. With S5 and S12 plays an important role in translational accuracy. The protein is Small ribosomal subunit protein uS4 of Chlamydia muridarum (strain MoPn / Nigg).